A 105-amino-acid chain; its full sequence is MATYQVEVIYQGQSQTFTADSDQSVLDSAQAAGVDLPASCLTGVCTTCAARILSGEVDQPDAMGVGPEPAKQGYTLLCVAYPRSDLKIETHKEDELYALQFGQPG.

The region spanning 4–94 (YQVEVIYQGQ…DLKIETHKED (91 aa)) is the 2Fe-2S ferredoxin-type domain. [2Fe-2S] cluster-binding residues include Cys40, Cys45, Cys48, and Cys78.

This sequence belongs to the 2Fe2S plant-type ferredoxin family. As to quaternary structure, forms a complex with heterodimeric ferredoxin-thioredoxin reductase (FTR) and thioredoxin. [2Fe-2S] cluster serves as cofactor.

In terms of biological role, ferredoxins are iron-sulfur proteins that transfer electrons in a wide variety of metabolic reactions. This is Ferredoxin-2 (petF2) from Synechococcus sp. (strain ATCC 27144 / PCC 6301 / SAUG 1402/1) (Anacystis nidulans).